The following is a 377-amino-acid chain: Alanine racemase (377 aa).

The active-site Proton acceptor; specific for D-alanine is Lys37. Lys37 carries the post-translational modification N6-(pyridoxal phosphate)lysine. Arg135 provides a ligand contact to substrate. Residue Tyr271 is the Proton acceptor; specific for L-alanine of the active site. A substrate-binding site is contributed by Met319.

This sequence belongs to the alanine racemase family. The cofactor is pyridoxal 5'-phosphate.

The enzyme catalyses L-alanine = D-alanine. It functions in the pathway amino-acid biosynthesis; D-alanine biosynthesis; D-alanine from L-alanine: step 1/1. Functionally, catalyzes the interconversion of L-alanine and D-alanine. May also act on other amino acids. The chain is Alanine racemase (alr) from Helicobacter pylori (strain G27).